The sequence spans 151 residues: Ubiquitin-conjugating enzyme E2 2 (151 aa).

The UBC core domain maps to 4–150 (AARRRLMRDF…VRETVEKSWE (147 aa)). The active-site Glycyl thioester intermediate is the C88.

It belongs to the ubiquitin-conjugating enzyme family.

The protein resides in the cytoplasm. Its subcellular location is the nucleus. It carries out the reaction S-ubiquitinyl-[E1 ubiquitin-activating enzyme]-L-cysteine + [E2 ubiquitin-conjugating enzyme]-L-cysteine = [E1 ubiquitin-activating enzyme]-L-cysteine + S-ubiquitinyl-[E2 ubiquitin-conjugating enzyme]-L-cysteine.. The protein operates within protein modification; protein ubiquitination. Catalyzes the covalent attachment of ubiquitin to other proteins. Plays a role in transcription regulation by catalyzing the monoubiquitination of histone H2B to form H2BK123ub1. H2BK123ub1 gives a specific tag for epigenetic transcriptional activation and is also a prerequisite for H3K4me and H3K79me formation. Also involved in postreplication repair of UV-damaged DNA, in N-end rule-dependent protein degradation and in sporulation. The chain is Ubiquitin-conjugating enzyme E2 2 (mus-8) from Neurospora crassa (strain ATCC 24698 / 74-OR23-1A / CBS 708.71 / DSM 1257 / FGSC 987).